The chain runs to 501 residues: Glutamate--tRNA ligase (501 aa).

The short motif at 11-21 (PSPTGALHIGG) is the 'HIGH' region element. The 'KMSKS' region signature appears at 260-264 (KLSKR). Position 263 (lysine 263) interacts with ATP.

The protein belongs to the class-I aminoacyl-tRNA synthetase family. Glutamate--tRNA ligase type 1 subfamily. In terms of assembly, monomer.

It is found in the cytoplasm. The catalysed reaction is tRNA(Glu) + L-glutamate + ATP = L-glutamyl-tRNA(Glu) + AMP + diphosphate. Catalyzes the attachment of glutamate to tRNA(Glu) in a two-step reaction: glutamate is first activated by ATP to form Glu-AMP and then transferred to the acceptor end of tRNA(Glu). This chain is Glutamate--tRNA ligase, found in Flavobacterium psychrophilum (strain ATCC 49511 / DSM 21280 / CIP 103535 / JIP02/86).